Consider the following 92-residue polypeptide: Small ribosomal subunit protein bS20 (92 aa).

Residues 1–24 form a disordered region; it reads MANTTSAKKATRKIARRTDVNKAR.

Belongs to the bacterial ribosomal protein bS20 family.

Its function is as follows. Binds directly to 16S ribosomal RNA. This chain is Small ribosomal subunit protein bS20, found in Rhizobium etli (strain ATCC 51251 / DSM 11541 / JCM 21823 / NBRC 15573 / CFN 42).